Reading from the N-terminus, the 433-residue chain is uncharacterized protein (433 aa).

Residues 1 to 26 (MTRRAEFEMGLFVILQSMFLISLCSS) form the signal peptide. N-linked (GlcNAc...) asparagine glycans are attached at residues N59, N72, N125, N159, N210, N275, N282, and N323. Residue A405 is the site of GPI-anchor amidated alanine attachment. Positions 406 to 433 (SSQPRLHDEGVTRLVIFVLSMLLVMLLS) are cleaved as a propeptide — removed in mature form.

It localises to the cell membrane. This is an uncharacterized protein from Arabidopsis thaliana (Mouse-ear cress).